Here is a 56-residue protein sequence, read N- to C-terminus: Endoregulin (56 aa).

A helical membrane pass occupies residues 25 to 45; it reads LTVIGLFTSTFLLFVLFAVVF.

Homooligomer. Can also form heterooligomers with other sarcoplasmic/endoplasmic reticulum calcium ATPase (SERCA) regulators ARLN, PLN, SLN and STRIT1/DWORF. Monomer. Interacts as a monomer with ATP2A2/SERCA2; the interaction results in inhibition of ATP2A2 Ca(2+) affinity. In terms of tissue distribution, largely expressed in non-muscle tissues with the exception of weak expression in body wall muscles at 14.5 dpc. Expressed in epithelial cells of the trachea, bronchus, lung, intestine, pancreas, and liver.

The protein localises to the endoplasmic reticulum membrane. Functionally, inhibits the activity of the calcium ATPases ATP2A2/SERCA2 and ATP2A3/SERCA3 by decreasing their apparent affinity for Ca(2+). In Mus musculus (Mouse), this protein is Endoregulin (Erln).